The primary structure comprises 399 residues: Type II secretion system protein L (399 aa).

Residues 1 to 247 are Cytoplasmic-facing; it reads MSKAENTSGK…VKPWKQALLP (247 aa). The chain crosses the membrane as a helical span at residues 248-264; sequence WRNVLIALSAWLLLVLG. The Periplasmic segment spans residues 265 to 399; it reads ESVWTHYQWY…EGQLTLRSQP (135 aa).

Belongs to the GSP L family. In terms of assembly, type II secretion system is composed of four main components: the outer membrane complex, the inner membrane complex, the cytoplasmic secretion ATPase and the periplasm-spanning pseudopilus. Forms homodimers. Interacts with OutM/GspM. Interacts with OutE/GspE and OutF/GspF.

It is found in the cell inner membrane. Its function is as follows. Inner membrane component of the type II secretion system required for the energy-dependent secretion of extracellular factors such as proteases and toxins from the periplasm. Plays a role in the complex assembly and recruits OutM resulting in a stable complex in the inner membrane. Provides thus a link between the energy-providing OutE protein in the cytoplasm and the rest of the T2SS machinery. The polypeptide is Type II secretion system protein L (outL) (Dickeya chrysanthemi (Pectobacterium chrysanthemi)).